The sequence spans 471 residues: Glycosyl hydrolase family 109 protein 1 (471 aa).

Positions 1–15 are cleaved as a signal peptide; sequence MIKNLSTFFVGIALS. Cys-16 is lipidated: N-palmitoyl cysteine. Residue Cys-16 is the site of S-diacylglycerol cysteine attachment. Residues 70–71, Asp-92, 141–144, 161–162, and Asn-190 each bind NAD(+); these read MR, WKHH, and EV. Substrate is bound by residues Tyr-219, Arg-235, 247 to 250, and Tyr-325; that span reads YATH. Tyr-247 serves as a coordination point for NAD(+).

The protein belongs to the Gfo/Idh/MocA family. Glycosyl hydrolase 109 subfamily. Requires NAD(+) as cofactor.

The protein resides in the cell membrane. Its function is as follows. Glycosidase. In Phocaeicola vulgatus (strain ATCC 8482 / DSM 1447 / JCM 5826 / CCUG 4940 / NBRC 14291 / NCTC 11154) (Bacteroides vulgatus), this protein is Glycosyl hydrolase family 109 protein 1.